Here is an 860-residue protein sequence, read N- to C-terminus: DNA primase (860 aa).

The CHC2-type zinc finger occupies 804 to 842; that stretch reads CLNRQHRGNRDNVLVYIQLKADGNRLILILWSTCFATKC.

Belongs to the herpesviridae DNA primase family. In terms of assembly, associates with the helicase and the primase-associated factor to form the helicase-primase factor.

The protein localises to the host nucleus. In terms of biological role, essential component of the helicase/primase complex. Unwinds the DNA at the replication forks and generates single-stranded DNA for both leading and lagging strand synthesis. The primase initiates primer synthesis and thereby produces large amount of short RNA primers on the lagging strand that the polymerase elongates using dNTPs. The chain is DNA primase (U43) from Homo sapiens (Human).